A 492-amino-acid polypeptide reads, in one-letter code: Gamma-aminobutyric acid receptor subunit alpha-3 (492 aa).

The first 28 residues, 1–28, serve as a signal peptide directing secretion; the sequence is MIITQMSQFYMAGLGLLFLINILPGTTG. The Extracellular segment spans residues 29 to 274; sequence QVESRRQEPG…MTTHFHLKRK (246 aa). An N-linked (GlcNAc...) asparagine glycan is attached at N63. R119 contacts 4-aminobutanoate. N163 and N176 each carry an N-linked (GlcNAc...) asparagine glycan. T182 provides a ligand contact to 4-aminobutanoate. A disulfide bridge connects residues C191 and C205. N228 carries an N-linked (GlcNAc...) asparagine glycan. Residues 275–295 form a helical membrane-spanning segment; the sequence is IGYFVIQTYLPCIMTVILSQV. Residues 296–305 lie on the Cytoplasmic side of the membrane; that stretch reads SFWLNRESVP. Residues 306–325 form a helical membrane-spanning segment; sequence ARTVFGVTTVLTMTTLSISA. Over 326–336 the chain is Extracellular; the sequence is RNSLPKVAYAT. The chain crosses the membrane as a helical span at residues 337–357; it reads AMDWFMAVCYAFVFSALIEFA. Residues 358–457 are Cytoplasmic-facing; that stretch reads TVNYFTKRSW…TYNSVSKVDK (100 aa). A Phosphoserine modification is found at S426. T427 bears the Phosphothreonine mark. S433 is modified (phosphoserine). The chain crosses the membrane as a helical span at residues 458-478; the sequence is ISRIIFPVLFAIFNLVYWATY. Residues 479-492 are Extracellular-facing; that stretch reads VNRESAIKGMIRKQ.

Belongs to the ligand-gated ion channel (TC 1.A.9) family. Gamma-aminobutyric acid receptor (TC 1.A.9.5) subfamily. GABRA3 sub-subfamily. In terms of assembly, heteropentamer, formed by a combination of alpha (GABRA1-6), beta (GABRB1-3), gamma (GABRG1-3), delta (GABRD), epsilon (GABRE), rho (GABRR1-3), pi (GABRP) and theta (GABRQ) chains, each subunit exhibiting distinct physiological and pharmacological properties. Binds UBQLN1. Interacts with GPHN.

It localises to the postsynaptic cell membrane. The protein resides in the cell membrane. The enzyme catalyses chloride(in) = chloride(out). Alpha subunit of the heteropentameric ligand-gated chloride channel gated by gamma-aminobutyric acid (GABA), a major inhibitory neurotransmitter in the brain. GABA-gated chloride channels, also named GABA(A) receptors (GABAAR), consist of five subunits arranged around a central pore and contain GABA active binding site(s) located at the alpha and beta subunit interface(s). When activated by GABA, GABAARs selectively allow the flow of chloride anions across the cell membrane down their electrochemical gradient. Chloride influx into the postsynaptic neuron following GABAAR opening decreases the neuron ability to generate a new action potential, thereby reducing nerve transmission. The protein is Gamma-aminobutyric acid receptor subunit alpha-3 (GABRA3) of Bos taurus (Bovine).